The following is a 363-amino-acid chain: DNA polymerase IV (363 aa).

The 184-residue stretch at Ile-14–Gly-197 folds into the UmuC domain. 2 residues coordinate Mg(2+): Asp-18 and Asp-115. Glu-116 is a catalytic residue.

Belongs to the DNA polymerase type-Y family. In terms of assembly, monomer. The cofactor is Mg(2+).

Its subcellular location is the cytoplasm. The catalysed reaction is DNA(n) + a 2'-deoxyribonucleoside 5'-triphosphate = DNA(n+1) + diphosphate. Poorly processive, error-prone DNA polymerase involved in untargeted mutagenesis. Copies undamaged DNA at stalled replication forks, which arise in vivo from mismatched or misaligned primer ends. These misaligned primers can be extended by PolIV. Exhibits no 3'-5' exonuclease (proofreading) activity. May be involved in translesional synthesis, in conjunction with the beta clamp from PolIII. The polypeptide is DNA polymerase IV (Lactococcus lactis subsp. lactis (strain IL1403) (Streptococcus lactis)).